Reading from the N-terminus, the 210-residue chain is Orotate phosphoribosyltransferase (210 aa).

Residues R96, K100, H102, and 122-130 (EDLISTGGS) contribute to the 5-phospho-alpha-D-ribose 1-diphosphate site. Position 126 (S126) interacts with orotate.

The protein belongs to the purine/pyrimidine phosphoribosyltransferase family. PyrE subfamily. In terms of assembly, homodimer. The cofactor is Mg(2+).

The catalysed reaction is orotidine 5'-phosphate + diphosphate = orotate + 5-phospho-alpha-D-ribose 1-diphosphate. Its pathway is pyrimidine metabolism; UMP biosynthesis via de novo pathway; UMP from orotate: step 1/2. Functionally, catalyzes the transfer of a ribosyl phosphate group from 5-phosphoribose 1-diphosphate to orotate, leading to the formation of orotidine monophosphate (OMP). This chain is Orotate phosphoribosyltransferase, found in Streptococcus pneumoniae (strain ATCC BAA-255 / R6).